A 628-amino-acid polypeptide reads, in one-letter code: MAYQAGEFDVIVIGAGHAGIEASLAAARMGSKTVMLTMNPDMVGFMYCNPSIGGPAKGIVVREIDALGGEMARAIDATYIQMKMLNTSKGPAVRALRAQADKFEYQNRMKKALEDEPNLLLRQALVERLIIEDDTCVGVVTNTGAEYRAKAVIITTGTFMRGKIIIGELSYESGPNNQMPSVNLSKHLEELGFELARFKTGTPPRIDGKTIDYSKTEIQPGDAVALPFSHETTQMITEQIPCWLTYTTEYTHQLIDANLHRSPMFSGMIKGTGPRYCPSIEDKVVRFSDKPRHQIFLEPEGRDTEEVYVQGLSTSLPEDVQHDILRSIPGLEKSEMMRPGYAIEYDAVVPTQLWPTLETKRIAGLFTAGQINGTSGYEEAAGQGIMAGINAALKVQERDPLILSRSQGYIGVMIDDLVTKGTNEPYRLLTSRAEYRLLLRHDNADLRLSDIGYDLGLINETRHAKLAEKKEDIQREMKRLEKVVIKATSEVNERLTEIGVSPLKEALHAITLLKRPEITYAMIADMTPPPVALSEEAAEQVEIQVKYAGYIDKQLDQVERMMRMEKKRIPERLDYDVISGLAIEAKQKLNQVRPLSIGQASRISGVNPSDISILLVYIEQGQYALTAE.

FAD contacts are provided by residues 14-19 (GAGHAG), Val-126, and Ser-181. An NAD(+)-binding site is contributed by 273–287 (GPRYCPSIEDKVVRF). Residue Gln-370 participates in FAD binding.

It belongs to the MnmG family. Homodimer. Heterotetramer of two MnmE and two MnmG subunits. The cofactor is FAD.

The protein resides in the cytoplasm. Functionally, NAD-binding protein involved in the addition of a carboxymethylaminomethyl (cmnm) group at the wobble position (U34) of certain tRNAs, forming tRNA-cmnm(5)s(2)U34. The sequence is that of tRNA uridine 5-carboxymethylaminomethyl modification enzyme MnmG from Exiguobacterium sibiricum (strain DSM 17290 / CCUG 55495 / CIP 109462 / JCM 13490 / 255-15).